The primary structure comprises 467 residues: Envelope glycoprotein M (467 aa).

The Intravirion segment spans residues 1–32 (MGRRAPRGSPEAAPGADVAPGARAAWWVWCVQ). Residues 33–53 (VATFIVSAICVVGLLVLASVF) traverse the membrane as a helical segment. Over 54–90 (RDRFPCLYAPATSYAKANATVEVRGGVAVPLRLDTQS) the chain is Virion surface. Residues 91-111 (LLATYAITSTLLLAAAVYAAV) form a helical membrane-spanning segment. The Intravirion portion of the chain corresponds to 112 to 137 (GAVTSRYERALDAARRLAAARMAMPH). A helical transmembrane segment spans residues 138–158 (ATLIAGNVCAWLLQITVLLLA). Topologically, residues 159–163 (HRISQ) are virion surface. A helical membrane pass occupies residues 164–184 (LAHLIYVLHFACLVYLAAHFC). Residues 185-220 (TRGVLSGTYLRQVHGLIDPAPTHHRIVGPVRAVMTN) are Intravirion-facing. Residues 221-241 (ALLLGTLLCTAAAAVSLNTIA) form a helical membrane-spanning segment. Residues 242–250 (ALNFNFSAP) are Virion surface-facing. A helical transmembrane segment spans residues 251 to 271 (SMLICLTTLFALLVVSLLLVV). At 272 to 280 (EGVLCHYVR) the chain is on the intravirion side. The chain crosses the membrane as a helical span at residues 281 to 301 (VLVGPHLGAIAATGIVGLACE). At 302 to 318 (HYHTGGYYVVEQQWPGA) the chain is on the virion surface side. The chain crosses the membrane as a helical span at residues 319 to 339 (QTGVRVALALVAAFALAMAVL). Residues 340 to 467 (RCTRAYLYHR…EPVYSTVRRW (128 aa)) are Intravirion-facing. Residues 371–381 (RRVRSSMRGSR) show a composition bias toward basic residues. 2 disordered regions span residues 371 to 395 (RRVR…AETP) and 432 to 459 (VQRP…AGEP).

Belongs to the herpesviridae glycoprotein M family. As to quaternary structure, interacts (via N-terminus) with gN (via N-terminus). The gM-gN heterodimer forms the gCII complex.

It localises to the virion membrane. Its subcellular location is the host Golgi apparatus. It is found in the host trans-Golgi network. The protein resides in the host endosome membrane. The protein localises to the host nucleus inner membrane. In terms of biological role, envelope glycoprotein important for virion assembly and egress. Plays a role in the correct incorporation of gH-gL into virion membrane. Directs the glycoprotein N (gN) to the host trans-Golgi network. This chain is Envelope glycoprotein M, found in Human herpesvirus 2 (strain HG52) (HHV-2).